The primary structure comprises 110 residues: Insulin (110 aa).

An N-terminal signal peptide occupies residues 1–24; it reads MALWMRLLPLLAFLILWEPSPAHA. Disulfide bonds link Cys-31-Cys-96, Cys-43-Cys-109, and Cys-95-Cys-100. Residues 57–87 constitute a propeptide, c peptide; sequence GVDDPQMPQLELGGSPGAGDLRALALEVARQ.

This sequence belongs to the insulin family. Heterodimer of a B chain and an A chain linked by two disulfide bonds.

Its subcellular location is the secreted. Functionally, insulin decreases blood glucose concentration. It increases cell permeability to monosaccharides, amino acids and fatty acids. It accelerates glycolysis, the pentose phosphate cycle, and glycogen synthesis in liver. The sequence is that of Insulin (INS) from Psammomys obesus (Fat sand rat).